Here is a 144-residue protein sequence, read N- to C-terminus: Maximins 2/H8 type 2 (144 aa).

The N-terminal stretch at 1–18 is a signal peptide; that stretch reads MNFKYIVAVSFLIASAYA. The propeptide occupies 19-43; the sequence is RSEENEIQSLSQRDVLEEESLREIR. Asn70 is subject to Asparagine amide. Residues 74-123 constitute a propeptide that is removed on maturation; sequence TAEEHEVMKRLETVMRDLDSLDYPEEASERETRGFNQEEIANLFTKKEKR. Isoleucine amide is present on Ile143.

The protein belongs to the bombinin family. As to expression, expressed by the skin glands.

Its subcellular location is the secreted. Maximin-2 shows antibacterial activity against both Gram-positive and Gram-negative bacteria. It also shows antimicrobial activity against the fungus C.albicans, but not against A.flavus nor P.uticale. It has little hemolytic activity. In terms of biological role, maximin-H8 shows antimicrobial activity against bacteria and against the fungus C.albicans. Shows strong hemolytic activity. This Bombina maxima (Giant fire-bellied toad) protein is Maximins 2/H8 type 2.